A 211-amino-acid chain; its full sequence is Peptidyl-prolyl cis-trans isomerase-like 3 (211 aa).

Residues 1-204 (MSVTLHTTHG…ETLRINRVTI (204 aa)) enclose the PPIase cyclophilin-type domain.

This sequence belongs to the cyclophilin-type PPIase family. PPIL3 subfamily.

It carries out the reaction [protein]-peptidylproline (omega=180) = [protein]-peptidylproline (omega=0). PPIases accelerate the folding of proteins. It catalyzes the cis-trans isomerization of proline imidic peptide bonds in oligopeptides. This is Peptidyl-prolyl cis-trans isomerase-like 3 (cyp10) from Emericella nidulans (strain FGSC A4 / ATCC 38163 / CBS 112.46 / NRRL 194 / M139) (Aspergillus nidulans).